Here is an 85-residue protein sequence, read N- to C-terminus: Large ribosomal subunit protein bL27 (85 aa).

The disordered stretch occupies residues 1-22; sequence MAHKKAGGSTKNGRDSESKRLG.

This sequence belongs to the bacterial ribosomal protein bL27 family.

The chain is Large ribosomal subunit protein bL27 from Idiomarina loihiensis (strain ATCC BAA-735 / DSM 15497 / L2-TR).